The chain runs to 226 residues: Large ribosomal subunit protein uL1 (226 aa).

This sequence belongs to the universal ribosomal protein uL1 family. As to quaternary structure, part of the 50S ribosomal subunit.

In terms of biological role, binds directly to 23S rRNA. The L1 stalk is quite mobile in the ribosome, and is involved in E site tRNA release. Protein L1 is also a translational repressor protein, it controls the translation of the L11 operon by binding to its mRNA. The chain is Large ribosomal subunit protein uL1 from Mycoplasma genitalium (strain ATCC 33530 / DSM 19775 / NCTC 10195 / G37) (Mycoplasmoides genitalium).